Reading from the N-terminus, the 234-residue chain is Interleukin-34 (234 aa).

Residues 1-20 form the signal peptide; the sequence is MPQGLAWLRYLGILLGMALG. Asparagine 76 carries an N-linked (GlcNAc...) asparagine glycan. Positions 191-234 are disordered; the sequence is EAPQPQPRSPASAQCEAAQLYPLPQPPSTSLPRVLGPSAGPPTQ.

It belongs to the IL-34 family. Homodimer. Interacts with CSF1R.

It localises to the secreted. Cytokine that promotes the proliferation, survival and differentiation of monocytes and macrophages. Promotes the release of pro-inflammatory chemokines, and thereby plays an important role in innate immunity and in inflammatory processes. Plays an important role in the regulation of osteoclast proliferation and differentiation, and in the regulation of bone resorption. Signaling via CSF1R and its downstream effectors stimulates phosphorylation of MAPK1/ERK2 AND MAPK3/ERK1. In Bos taurus (Bovine), this protein is Interleukin-34.